The primary structure comprises 161 residues: Cyclic pyranopterin monophosphate synthase (161 aa).

Residues 75–77 (LCH) and 113–114 (ME) contribute to the substrate site. Residue aspartate 128 is part of the active site.

This sequence belongs to the MoaC family. Homohexamer; trimer of dimers.

It carries out the reaction (8S)-3',8-cyclo-7,8-dihydroguanosine 5'-triphosphate = cyclic pyranopterin phosphate + diphosphate. Its pathway is cofactor biosynthesis; molybdopterin biosynthesis. Functionally, catalyzes the conversion of (8S)-3',8-cyclo-7,8-dihydroguanosine 5'-triphosphate to cyclic pyranopterin monophosphate (cPMP). The sequence is that of Cyclic pyranopterin monophosphate synthase from Citrobacter koseri (strain ATCC BAA-895 / CDC 4225-83 / SGSC4696).